Reading from the N-terminus, the 447-residue chain is Voltage-gated purine nucleotide uniporter SLC17A9 (447 aa).

The tract at residues 1–26 is disordered; that stretch reads MPSQRSSLMQPIPEETRKTPSAAAED. Basic and acidic residues predominate over residues 14–26; sequence EETRKTPSAAAED. The next 11 membrane-spanning stretches (helical) occupy residues 36-58, 74-94, 103-123, 129-149, 169-189, 197-217, 252-272, 287-307, 327-347, 380-400, and 413-433; these read LWTG…MPVC, GIVL…GGHL, VILL…LLAH, LAFV…YFPA, TVGA…SVLL, VFYF…KYLL, VWAV…LLSW, WVFN…SGFI, VMGL…TSFL, GFLF…GVCL, and CVFH…LVFG.

It belongs to the major facilitator superfamily. Sodium/anion cotransporter family.

It is found in the cytoplasmic vesicle. It localises to the secretory vesicle. Its subcellular location is the chromaffin granule membrane. The protein localises to the secretory vesicle membrane. The protein resides in the lysosome membrane. The catalysed reaction is ATP(in) = ATP(out). It catalyses the reaction ADP(in) = ADP(out). The enzyme catalyses GTP(in) = GTP(out). With respect to regulation, activity is chloride-dependent. Its function is as follows. Voltage-gated ATP nucleotide uniporter that can also transport the purine nucleotides ADP and GTP. Uses the membrane potential as the driving force to control ATP accumulation in lysosomes and secretory vesicles. By controlling ATP storage in lysosomes, regulates ATP-dependent proteins of these organelles. Also indirectly regulates the exocytosis of ATP through its import into lysosomes in astrocytes and secretory vesicles such as adrenal chromaffin granules, mucin granules and synaptic vesicles. The protein is Voltage-gated purine nucleotide uniporter SLC17A9 of Rattus norvegicus (Rat).